Consider the following 374-residue polypeptide: S-adenosylmethionine:tRNA ribosyltransferase-isomerase (374 aa).

This sequence belongs to the QueA family. In terms of assembly, monomer.

The protein resides in the cytoplasm. It catalyses the reaction 7-aminomethyl-7-carbaguanosine(34) in tRNA + S-adenosyl-L-methionine = epoxyqueuosine(34) in tRNA + adenine + L-methionine + 2 H(+). It participates in tRNA modification; tRNA-queuosine biosynthesis. Its function is as follows. Transfers and isomerizes the ribose moiety from AdoMet to the 7-aminomethyl group of 7-deazaguanine (preQ1-tRNA) to give epoxyqueuosine (oQ-tRNA). The chain is S-adenosylmethionine:tRNA ribosyltransferase-isomerase from Sorangium cellulosum (strain So ce56) (Polyangium cellulosum (strain So ce56)).